We begin with the raw amino-acid sequence, 251 residues long: Aspartate/glutamate leucyltransferase (251 aa).

Belongs to the R-transferase family. Bpt subfamily.

Its subcellular location is the cytoplasm. It carries out the reaction N-terminal L-glutamyl-[protein] + L-leucyl-tRNA(Leu) = N-terminal L-leucyl-L-glutamyl-[protein] + tRNA(Leu) + H(+). It catalyses the reaction N-terminal L-aspartyl-[protein] + L-leucyl-tRNA(Leu) = N-terminal L-leucyl-L-aspartyl-[protein] + tRNA(Leu) + H(+). Functionally, functions in the N-end rule pathway of protein degradation where it conjugates Leu from its aminoacyl-tRNA to the N-termini of proteins containing an N-terminal aspartate or glutamate. The sequence is that of Aspartate/glutamate leucyltransferase from Xanthomonas euvesicatoria pv. vesicatoria (strain 85-10) (Xanthomonas campestris pv. vesicatoria).